The chain runs to 120 residues: NADH-ubiquinone oxidoreductase chain 3 (120 aa).

3 consecutive transmembrane segments (helical) span residues 10 to 30 (ILIL…LGYF), 62 to 82 (FYLV…LFPF), and 89 to 109 (MTLF…IGFI).

This sequence belongs to the complex I subunit 3 family.

Its subcellular location is the mitochondrion membrane. It catalyses the reaction a ubiquinone + NADH + 5 H(+)(in) = a ubiquinol + NAD(+) + 4 H(+)(out). Functionally, core subunit of the mitochondrial membrane respiratory chain NADH dehydrogenase (Complex I) that is believed to belong to the minimal assembly required for catalysis. Complex I functions in the transfer of electrons from NADH to the respiratory chain. The immediate electron acceptor for the enzyme is believed to be ubiquinone. This chain is NADH-ubiquinone oxidoreductase chain 3 (nad3), found in Dictyostelium citrinum (Slime mold).